The following is a 271-amino-acid chain: MVKISFQPAVAGIKGDKADKASASASASAPAPTPAAEILLTPAREERPPYQRYKKGGSVGGVCYLSMGMVVLLMGLVFASVYIYRYFFLAQLARDNFFHCGVLYEDSLSSQAHTRMELEEDVKIYLEENYERINVPVPQFGGGDPADIIHDFQRGLTAYHDISLDKCYVIELNTTIVLPPRNFWELLMNVKRGTYLPQTYIIQEEMVVTEHVSDKEALGSFIYHLCSGKDTYRLRRRATRRRINKREAKNCNAIRHFENTFVVETLICGVV.

Thr41 is modified (phosphothreonine). The chain crosses the membrane as a helical; Signal-anchor for type II membrane protein span at residues 59–79 (VGGVCYLSMGMVVLLMGLVFA). A BRICHOS domain is found at 140 to 234 (FGGGDPADII…LCSGKDTYRL (95 aa)). The cysteines at positions 167 and 226 are disulfide-linked. The N-linked (GlcNAc...) asparagine glycan is linked to Asn173.

Belongs to the ITM2 family. As to quaternary structure, interacts with BACE1. Interacts with APP. Interacts with STMN2. Post-translationally, type I membrane-bound, as well as soluble, furin has a pre-eminent role in ITM2C proteolytic processing. PCSK7 and PCSK5 may also be involved although to a lesser extent. The soluble form of PCSK7 is incapable of processing ITM2C. Fails to undergo shedding by ADAM10 and intramembrane cleavage by SPPL2B.

It is found in the lysosome membrane. The protein localises to the cell membrane. Its function is as follows. Negative regulator of amyloid-beta peptide production. May inhibit the processing of APP by blocking its access to alpha- and beta-secretase. Binding to the beta-secretase-cleaved APP C-terminal fragment is negligible, suggesting that ITM2C is a poor gamma-secretase cleavage inhibitor. May play a role in TNF-induced cell death and neuronal differentiation. The chain is Integral membrane protein 2C (ITM2C) from Bos taurus (Bovine).